A 518-amino-acid polypeptide reads, in one-letter code: 2-isopropylmalate synthase (518 aa).

Residues 4–266 (INVFDTTLRD…DSSLNLHELK (263 aa)) enclose the Pyruvate carboxyltransferase domain. Residues Asp-13, His-201, His-203, and Asn-237 each coordinate Mn(2+). The regulatory domain stretch occupies residues 391–518 (EFLSLQVHYG…GLKRQTAVGS (128 aa)).

It belongs to the alpha-IPM synthase/homocitrate synthase family. LeuA type 1 subfamily. As to quaternary structure, homodimer. The cofactor is Mn(2+).

It localises to the cytoplasm. The enzyme catalyses 3-methyl-2-oxobutanoate + acetyl-CoA + H2O = (2S)-2-isopropylmalate + CoA + H(+). The protein operates within amino-acid biosynthesis; L-leucine biosynthesis; L-leucine from 3-methyl-2-oxobutanoate: step 1/4. In terms of biological role, catalyzes the condensation of the acetyl group of acetyl-CoA with 3-methyl-2-oxobutanoate (2-ketoisovalerate) to form 3-carboxy-3-hydroxy-4-methylpentanoate (2-isopropylmalate). This is 2-isopropylmalate synthase from Bacillus velezensis (strain DSM 23117 / BGSC 10A6 / LMG 26770 / FZB42) (Bacillus amyloliquefaciens subsp. plantarum).